The primary structure comprises 455 residues: tRNA-2-methylthio-N(6)-dimethylallyladenosine synthase (455 aa).

Residues 10 to 130 (RKVFIKTYGC…LPDALKRVRR (121 aa)) form the MTTase N-terminal domain. Residues cysteine 19, cysteine 55, cysteine 93, cysteine 171, cysteine 175, and cysteine 178 each contribute to the [4Fe-4S] cluster site. Residues 157 to 389 (RSRGVTAFLT…QALLLRQQKE (233 aa)) enclose the Radical SAM core domain. The TRAM domain maps to 392-454 (ESLVGKTMDV…PNSLFAEVAG (63 aa)).

Belongs to the methylthiotransferase family. MiaB subfamily. Monomer. The cofactor is [4Fe-4S] cluster.

It localises to the cytoplasm. It catalyses the reaction N(6)-dimethylallyladenosine(37) in tRNA + (sulfur carrier)-SH + AH2 + 2 S-adenosyl-L-methionine = 2-methylsulfanyl-N(6)-dimethylallyladenosine(37) in tRNA + (sulfur carrier)-H + 5'-deoxyadenosine + L-methionine + A + S-adenosyl-L-homocysteine + 2 H(+). Catalyzes the methylthiolation of N6-(dimethylallyl)adenosine (i(6)A), leading to the formation of 2-methylthio-N6-(dimethylallyl)adenosine (ms(2)i(6)A) at position 37 in tRNAs that read codons beginning with uridine. This chain is tRNA-2-methylthio-N(6)-dimethylallyladenosine synthase, found in Agrobacterium fabrum (strain C58 / ATCC 33970) (Agrobacterium tumefaciens (strain C58)).